Reading from the N-terminus, the 572-residue chain is DNA polymerase (572 aa).

Residues Met-1–Ala-222 are 3'-5' exonuclease and strand displacement activities. Residues Tyr-56–Phe-66 form an interaction with the primer terminal protein region. 2 residues coordinate Mg(2+): Asp-142 and Asp-166. Positions Tyr-223–Gly-226 are DNA-binding; Involved in the formation of a stable complex between TP and phi29 DNA polymerase. The segment at Phe-227 to Lys-572 is initiation, polymerization and pyrophosphorolytic activities. Mg(2+)-binding residues include Asp-246 and Val-247. 3 residues coordinate 5-methyl-UTP: Tyr-251, Lys-368, and Lys-380. Positions 453 and 455 each coordinate Mg(2+). Asp-455 lines the 5-methyl-UTP pocket.

It belongs to the DNA polymerase type-B family. As to quaternary structure, interacts with the primer terminal protein; this interaction allows the initiation of TP-primed DNA replication at both viral DNA ends. Interacts with DNA. It depends on Mg(2+) as a cofactor.

The enzyme catalyses DNA(n) + a 2'-deoxyribonucleoside 5'-triphosphate = DNA(n+1) + diphosphate. Polymerase responsible for protein-primed viral DNA replication by strand displacement with high processivity and fidelity. To start replication, the DNA polymerase forms a heterodimer with a free primer terminal protein (TP), recognizes the replication origins at both 5' ends of the linear chromosome, and initiates replication using as primer the OH-group of Ser-232 of the TP. This polymerase possesses three enzymatic activities: DNA synthesis (polymerase), primer terminal protein (TP) deoxynucleotidylation, which is the formation of a covalent linkage (phosphoester) between the hydroxyl group of a specific serine residue in TP and 5'-dAMP, a reaction directed by the second T at the 3' end, and 3' to 5' exonuclease activity. Exonuclease activity has a proofreading purpose. This chain is DNA polymerase (G), found in Bacillus phage M2 (Bacteriophage M2).